Here is a 741-residue protein sequence, read N- to C-terminus: Isocitrate dehydrogenase [NADP] (741 aa).

The NADP(+) site is built by asparagine 85 and serine 87. Positions 132, 135, 139, 145, and 255 each coordinate D-threo-isocitrate. Asparagine 135 provides a ligand contact to NADP(+). Residue aspartate 350 coordinates Mn(2+). 2 residues coordinate D-threo-isocitrate: tyrosine 420 and arginine 547. Residue aspartate 548 participates in Mn(2+) binding. Serine 585, histidine 589, arginine 600, aspartate 602, and arginine 649 together coordinate NADP(+).

The protein belongs to the monomeric-type IDH family. In terms of assembly, monomer. It depends on Mg(2+) as a cofactor. Requires Mn(2+) as cofactor.

Its subcellular location is the cytoplasm. The enzyme catalyses D-threo-isocitrate + NADP(+) = 2-oxoglutarate + CO2 + NADPH. With respect to regulation, activity is inhibited in the presence of Ca(2+). Functionally, catalyzes the oxidative decarboxylation of isocitrate to 2-oxoglutarate and carbon dioxide with the concomitant reduction of NADP(+). This Azotobacter vinelandii protein is Isocitrate dehydrogenase [NADP].